Here is a 461-residue protein sequence, read N- to C-terminus: Ornithine decarboxylase (461 aa).

N6-(pyridoxal phosphate)lysine is present on K69. Pyridoxal 5'-phosphate is bound by residues S200, G237, and 274 to 277; that span reads EPGR. Position 303 is a phosphoserine; by CK2 (S303). Residue 331 to 332 coordinates substrate; the sequence is YD. C360 serves as the catalytic Proton donor; shared with dimeric partner. C360 is subject to S-nitrosocysteine. Residue D361 participates in substrate binding. A pyridoxal 5'-phosphate-binding site is contributed by Y389.

This sequence belongs to the Orn/Lys/Arg decarboxylase class-II family. In terms of assembly, homodimer. Only the dimer is catalytically active, as the active sites are constructed of residues from both monomers. Pyridoxal 5'-phosphate is required as a cofactor.

It carries out the reaction L-ornithine + H(+) = putrescine + CO2. Its pathway is amine and polyamine biosynthesis; putrescine biosynthesis via L-ornithine pathway; putrescine from L-ornithine: step 1/1. Its activity is regulated as follows. Inhibited by antizymes (AZs) OAZ1, OAZ2 and OAZ3 in response to polyamine levels. AZs inhibit the assembly of the functional homodimer by binding to ODC monomers. Additionally, OAZ1 targets ODC monomers for ubiquitin-independent proteolytic destruction by the 26S proteasome. Its function is as follows. Catalyzes the first and rate-limiting step of polyamine biosynthesis that converts ornithine into putrescine, which is the precursor for the polyamines, spermidine and spermine. Polyamines are essential for cell proliferation and are implicated in cellular processes, ranging from DNA replication to apoptosis. The sequence is that of Ornithine decarboxylase (ODC1) from Bos taurus (Bovine).